Consider the following 516-residue polypeptide: Maturase K (516 aa).

It belongs to the intron maturase 2 family. MatK subfamily.

The protein localises to the plastid. The protein resides in the chloroplast. Functionally, usually encoded in the trnK tRNA gene intron. Probably assists in splicing its own and other chloroplast group II introns. This chain is Maturase K, found in Chara globularis (Fragile stonewort).